A 93-amino-acid polypeptide reads, in one-letter code: Small ribosomal subunit protein uS19 (93 aa).

The protein belongs to the universal ribosomal protein uS19 family.

Its function is as follows. Protein S19 forms a complex with S13 that binds strongly to the 16S ribosomal RNA. This Latilactobacillus sakei subsp. sakei (strain 23K) (Lactobacillus sakei subsp. sakei) protein is Small ribosomal subunit protein uS19.